Here is a 331-residue protein sequence, read N- to C-terminus: tRNA-cytidine(32) 2-sulfurtransferase (331 aa).

The disordered stretch occupies residues 1 to 33 (MNAPHMNDTAADAATLDDAAAPAGRPALTRREQ). A compositionally biased stretch (low complexity) spans 8 to 23 (DTAADAATLDDAAAPA). The PP-loop motif signature appears at 71–76 (SGGKDS). Residues cysteine 146, cysteine 149, and cysteine 237 each coordinate [4Fe-4S] cluster.

It belongs to the TtcA family. Homodimer. The cofactor is Mg(2+). [4Fe-4S] cluster is required as a cofactor.

The protein localises to the cytoplasm. It carries out the reaction cytidine(32) in tRNA + S-sulfanyl-L-cysteinyl-[cysteine desulfurase] + AH2 + ATP = 2-thiocytidine(32) in tRNA + L-cysteinyl-[cysteine desulfurase] + A + AMP + diphosphate + H(+). Its pathway is tRNA modification. Catalyzes the ATP-dependent 2-thiolation of cytidine in position 32 of tRNA, to form 2-thiocytidine (s(2)C32). The sulfur atoms are provided by the cysteine/cysteine desulfurase (IscS) system. The polypeptide is tRNA-cytidine(32) 2-sulfurtransferase (Burkholderia cenocepacia (strain HI2424)).